The sequence spans 200 residues: Large ribosomal subunit protein uL4 (200 aa).

Positions 38 to 72 are disordered; it reads GRQGTKQQKTRSDVAGGGKRPWRQKGTGRARAGTT.

This sequence belongs to the universal ribosomal protein uL4 family. As to quaternary structure, part of the 50S ribosomal subunit.

In terms of biological role, one of the primary rRNA binding proteins, this protein initially binds near the 5'-end of the 23S rRNA. It is important during the early stages of 50S assembly. It makes multiple contacts with different domains of the 23S rRNA in the assembled 50S subunit and ribosome. Functionally, forms part of the polypeptide exit tunnel. The chain is Large ribosomal subunit protein uL4 from Pseudomonas putida (strain ATCC 700007 / DSM 6899 / JCM 31910 / BCRC 17059 / LMG 24140 / F1).